The sequence spans 40 residues: Auxin-responsive endogenous peptide 1 (40 aa).

Residues Leu7–His29 form a helical membrane-spanning segment.

In terms of tissue distribution, expressed in cotyledons, hypocotyls, roots, newly developing leaves and shoot apical meristem. Not detected in flowers, siliques or mature leaves.

It localises to the cytoplasm. It is found in the nucleus. Its subcellular location is the membrane. Its function is as follows. Negative regulator of the auxin response. The sequence is that of Auxin-responsive endogenous peptide 1 from Arabidopsis thaliana (Mouse-ear cress).